The sequence spans 253 residues: tRNA pseudouridine synthase A (253 aa).

The active-site Nucleophile is D53. Y112 contributes to the substrate binding site.

The protein belongs to the tRNA pseudouridine synthase TruA family. In terms of assembly, homodimer.

It catalyses the reaction uridine(38/39/40) in tRNA = pseudouridine(38/39/40) in tRNA. Functionally, formation of pseudouridine at positions 38, 39 and 40 in the anticodon stem and loop of transfer RNAs. The protein is tRNA pseudouridine synthase A of Lactococcus lactis subsp. cremoris (strain MG1363).